The primary structure comprises 304 residues: Acetylglutamate kinase (304 aa).

Residues 77-78 (GG), Arg-99, and Asn-193 each bind substrate.

It belongs to the acetylglutamate kinase family. ArgB subfamily.

The protein resides in the cytoplasm. It catalyses the reaction N-acetyl-L-glutamate + ATP = N-acetyl-L-glutamyl 5-phosphate + ADP. Its pathway is amino-acid biosynthesis; L-arginine biosynthesis; N(2)-acetyl-L-ornithine from L-glutamate: step 2/4. In terms of biological role, catalyzes the ATP-dependent phosphorylation of N-acetyl-L-glutamate. In Chlorobium limicola (strain DSM 245 / NBRC 103803 / 6330), this protein is Acetylglutamate kinase.